A 357-amino-acid polypeptide reads, in one-letter code: tRNA-specific 2-thiouridylase MnmA (357 aa).

ATP-binding positions include 7-14 (AMSGGVDS) and methionine 33. Cysteine 101 (nucleophile) is an active-site residue. Cysteine 101 and cysteine 198 are oxidised to a cystine. Glycine 125 serves as a coordination point for ATP. The tract at residues 148–150 (KDQ) is interaction with tRNA. Catalysis depends on cysteine 198, which acts as the Cysteine persulfide intermediate.

The protein belongs to the MnmA/TRMU family.

The protein localises to the cytoplasm. The enzyme catalyses S-sulfanyl-L-cysteinyl-[protein] + uridine(34) in tRNA + AH2 + ATP = 2-thiouridine(34) in tRNA + L-cysteinyl-[protein] + A + AMP + diphosphate + H(+). In terms of biological role, catalyzes the 2-thiolation of uridine at the wobble position (U34) of tRNA, leading to the formation of s(2)U34. The polypeptide is tRNA-specific 2-thiouridylase MnmA (Herpetosiphon aurantiacus (strain ATCC 23779 / DSM 785 / 114-95)).